The sequence spans 124 residues: uncharacterized protein (124 aa).

It is found in the cytoplasm. Its subcellular location is the nucleus. This is an uncharacterized protein from Schizosaccharomyces pombe (strain 972 / ATCC 24843) (Fission yeast).